The sequence spans 221 residues: MASSSFSFLLVAALLGLASWKAIASDPSPLQDFCVADLNSPVRVNGFVCKNPMNASADDFFKAAMLDKPRDTNNKVGSNVTLVNVLQLPGLNTLGISIARLDFAPLGLNPPHTHPRATEIFTVLEGTLYVGFVTSNPDNRLLSKVLNKGDVFVFPEGLIHFQFNPNPHKPAVAIAALSSQNPGVITIANAVFGSNPPISDDILMKAFQVDKKIIDLLQAQF.

An N-terminal signal peptide occupies residues 1–24 (MASSSFSFLLVAALLGLASWKAIA). Cysteines 34 and 49 form a disulfide. 2 N-linked (GlcNAc...) asparagine glycosylation sites follow: N54 and N79. The Cupin type-1 domain occupies 64 to 215 (AMLDKPRDTN…AFQVDKKIID (152 aa)). Mn(2+) is bound by residues H112, H114, E119, and H160.

It belongs to the germin family. In terms of assembly, oligomer (believed to be a pentamer but probably hexamer).

The protein resides in the secreted. Its subcellular location is the extracellular space. It localises to the apoplast. In terms of biological role, plays a role in broad-spectrum disease resistance. Probably has no oxalate oxidase activity even if the active site is conserved. This chain is Germin-like protein 8-2 (GER3), found in Oryza sativa subsp. japonica (Rice).